Reading from the N-terminus, the 432-residue chain is Enolase (432 aa).

Gln167 is a binding site for (2R)-2-phosphoglycerate. Catalysis depends on Glu209, which acts as the Proton donor. Mg(2+)-binding residues include Asp246, Glu290, and Asp317. Residues Lys342, Arg371, Ser372, and Lys393 each contribute to the (2R)-2-phosphoglycerate site. Lys342 functions as the Proton acceptor in the catalytic mechanism.

This sequence belongs to the enolase family. In terms of assembly, component of the RNA degradosome, a multiprotein complex involved in RNA processing and mRNA degradation. Mg(2+) serves as cofactor.

It localises to the cytoplasm. The protein localises to the secreted. Its subcellular location is the cell surface. It carries out the reaction (2R)-2-phosphoglycerate = phosphoenolpyruvate + H2O. It functions in the pathway carbohydrate degradation; glycolysis; pyruvate from D-glyceraldehyde 3-phosphate: step 4/5. Functionally, catalyzes the reversible conversion of 2-phosphoglycerate (2-PG) into phosphoenolpyruvate (PEP). It is essential for the degradation of carbohydrates via glycolysis. The protein is Enolase of Klebsiella pneumoniae subsp. pneumoniae (strain ATCC 700721 / MGH 78578).